We begin with the raw amino-acid sequence, 307 residues long: ATP synthase gamma chain (307 aa).

The protein belongs to the ATPase gamma chain family. As to quaternary structure, F-type ATPases have 2 components, CF(1) - the catalytic core - and CF(0) - the membrane proton channel. CF(1) has five subunits: alpha(3), beta(3), gamma(1), delta(1), epsilon(1). CF(0) has three main subunits: a, b and c.

It localises to the cell membrane. In terms of biological role, produces ATP from ADP in the presence of a proton gradient across the membrane. The gamma chain is believed to be important in regulating ATPase activity and the flow of protons through the CF(0) complex. This chain is ATP synthase gamma chain, found in Mycolicibacterium smegmatis (strain ATCC 700084 / mc(2)155) (Mycobacterium smegmatis).